The sequence spans 235 residues: Purine nucleoside phosphorylase DeoD-type (235 aa).

Position 4 (histidine 4) interacts with a purine D-ribonucleoside. Residues glycine 20, arginine 24, arginine 43, and 87-90 (RVGT) contribute to the phosphate site. A purine D-ribonucleoside is bound by residues glutamate 162, 179–181 (EME), and 203–204 (SD). The active-site Proton donor is aspartate 204.

Belongs to the PNP/UDP phosphorylase family. Homohexamer; trimer of homodimers.

The enzyme catalyses a purine D-ribonucleoside + phosphate = a purine nucleobase + alpha-D-ribose 1-phosphate. It carries out the reaction a purine 2'-deoxy-D-ribonucleoside + phosphate = a purine nucleobase + 2-deoxy-alpha-D-ribose 1-phosphate. Functionally, catalyzes the reversible phosphorolytic breakdown of the N-glycosidic bond in the beta-(deoxy)ribonucleoside molecules, with the formation of the corresponding free purine bases and pentose-1-phosphate. This chain is Purine nucleoside phosphorylase DeoD-type, found in Bacillus cereus (strain ZK / E33L).